The following is an 817-amino-acid chain: MARLERDGTNKSLESLMDSHKPGGTTTNLNQLRTQKSIPGYGLEFTNLSYSIIKKQKKDGVWINKETYLLHDISGQAIKGEIMAIMGPSGAGKSTFLDALAGRIAKGSLQGSVRIDGKPVTTSYMKMVSSYVMQDDQLFPMLTVFETFMFAAEVRLPPSISRDEKKKRVHELLNKLGLQSATHTYIGDEGRRGVSGGERRRVSIGIEIIHKPSLLFLDEPTSGLDSTSAYSVVEKIKDIAQGGSIVLMTIHQPSFRIQMLLDKITILARGRLIYMGRPDALHTHLSGFGRPVPDGENNIEYLLDVITEYDQATVGLDPLVQYQHDGHKPDPAAMTPVPKPPRTPYRRNTPASKHMISLRSQGFTAGTPQPDSSQFGLDDDDNDDDENFDNSLERRSVQTSRNIVTSGVYPRLASQFYQDFSAKDFSVWLYNGVVGTPRRPPSWTPARTPGWTPGKTPLSGPRSFVSNQHSASYQDPYYIQKTNTVVGQSMDYSATSYAPSYEEFEIEEVLDEPDLGPKYANPWLREVAVLSWRTVLNVIRTPELFASREIVLTVMALVLSTIFKNLGDTTFIDINRLLNFYIFAVCLVFFSSNDAVPSFIMERFIFIRETSHNAYRASSYVISSLIVYLPFFAVQGLTFAVITKLMLHLKSNLFNFWMILFASLITTNAYVMLVSALVPSYITGYAVVIATTALFFLTCGFFLKRTQIPAYWKWLHYISAIKYPFEGLLINEFKNNRGCYSGNKADLSPGPLGDVKPSKHHNASLPLNCLLGEDVLSTMDITMESLWYDILILLAWGVLYRFFFYLVLRFYSKNERK.

The tract at residues 1–30 (MARLERDGTNKSLESLMDSHKPGGTTTNLN) is disordered. Over 1–542 (MARLERDGTN…RTVLNVIRTP (542 aa)) the chain is Cytoplasmic. Positions 43–294 (LEFTNLSYSI…LSGFGRPVPD (252 aa)) constitute an ABC transporter domain. Position 87–94 (87–94 (GPSGAGKS)) interacts with ATP. 3 disordered regions span residues 321–349 (QYQHDGHKPDPAAMTPVPKPPRTPYRRNT), 362–395 (GFTAGTPQPDSSQFGLDDDDNDDDENFDNSLERR), and 439–463 (RPPSWTPARTPGWTPGKTPLSGPRS). Residues 362 to 375 (GFTAGTPQPDSSQF) are compositionally biased toward polar residues. Positions 377-388 (LDDDDNDDDENF) are enriched in acidic residues. A helical membrane pass occupies residues 543–563 (ELFASREIVLTVMALVLSTIF). Residues 564–579 (KNLGDTTFIDINRLLN) lie on the Extracellular side of the membrane. A helical transmembrane segment spans residues 580–600 (FYIFAVCLVFFSSNDAVPSFI). The Cytoplasmic portion of the chain corresponds to 601–621 (MERFIFIRETSHNAYRASSYV). The chain crosses the membrane as a helical span at residues 622–642 (ISSLIVYLPFFAVQGLTFAVI). Over 643-657 (TKLMLHLKSNLFNFW) the chain is Extracellular. Residues 658-678 (MILFASLITTNAYVMLVSALV) traverse the membrane as a helical segment. Residues 679–681 (PSY) are Cytoplasmic-facing. The chain crosses the membrane as a helical span at residues 682-702 (ITGYAVVIATTALFFLTCGFF). The Extracellular segment spans residues 703–787 (LKRTQIPAYW…TMDITMESLW (85 aa)). Asn762 is a glycosylation site (N-linked (GlcNAc...) asparagine). A helical membrane pass occupies residues 788 to 808 (YDILILLAWGVLYRFFFYLVL). Over 809–817 (RFYSKNERK) the chain is Cytoplasmic.

It belongs to the ABC transporter superfamily. ABCG family. Stunted arbuscule (STR) subfamily. In terms of assembly, heterodimerizes with STR2; the resulting transporter is located in the peri-arbuscular membrane. Expressed constitutively in the vascular tissue of roots.

It localises to the cell membrane. In terms of biological role, together with STR2, required for arbuscule development in arbuscular mycorrhizal (AM) symbiosis. The chain is ABC transporter G family member STR from Medicago truncatula (Barrel medic).